Reading from the N-terminus, the 333-residue chain is Adenosine deaminase (333 aa).

Positions 12 and 14 each coordinate Zn(2+). Positions 14, 16, and 170 each coordinate substrate. His197 provides a ligand contact to Zn(2+). The active-site Proton donor is Glu200. Asp278 is a binding site for Zn(2+). Asp279 is a binding site for substrate.

The protein belongs to the metallo-dependent hydrolases superfamily. Adenosine and AMP deaminases family. Adenosine deaminase subfamily. The cofactor is Zn(2+).

It catalyses the reaction adenosine + H2O + H(+) = inosine + NH4(+). It carries out the reaction 2'-deoxyadenosine + H2O + H(+) = 2'-deoxyinosine + NH4(+). In terms of biological role, catalyzes the hydrolytic deamination of adenosine and 2-deoxyadenosine. The sequence is that of Adenosine deaminase from Salmonella enteritidis PT4 (strain P125109).